Consider the following 284-residue polypeptide: Sulfotransferase 2A1 (284 aa).

3'-phosphoadenylyl sulfate contacts are provided by K43, S44, G45, T46, N47, and W48. The active-site Proton acceptor is H98. 3'-phosphoadenylyl sulfate contacts are provided by R120, S128, Y183, S217, M222, R246, K247, and G248.

It belongs to the sulfotransferase 1 family. As to quaternary structure, homodimer.

Its subcellular location is the cytoplasm. It catalyses the reaction an alcohol + 3'-phosphoadenylyl sulfate = an alkyl sulfate + adenosine 3',5'-bisphosphate + H(+). The enzyme catalyses taurolithocholate + 3'-phosphoadenylyl sulfate = taurolithocholate 3-sulfate + adenosine 3',5'-bisphosphate + H(+). It carries out the reaction lithocholate + 3'-phosphoadenylyl sulfate = lithocholate sulfate + adenosine 3',5'-bisphosphate + H(+). The catalysed reaction is (24S)-hydroxycholesterol + 3'-phosphoadenylyl sulfate = (24S)-hydroxycholesterol 24-sulfate + adenosine 3',5'-bisphosphate + H(+). It catalyses the reaction (24S)-hydroxycholesterol + 3'-phosphoadenylyl sulfate = (24S)-hydroxycholesterol 3-sulfate + adenosine 3',5'-bisphosphate + H(+). The enzyme catalyses (24S)-hydroxycholesterol 24-sulfate + 3'-phosphoadenylyl sulfate = (24S)-hydroxycholesterol 3,24-disulfate + adenosine 3',5'-bisphosphate + H(+). It carries out the reaction 3beta-hydroxyandrost-5-en-17-one + 3'-phosphoadenylyl sulfate = dehydroepiandrosterone 3-sulfate + adenosine 3',5'-bisphosphate + H(+). The catalysed reaction is pregnenolone + 3'-phosphoadenylyl sulfate = pregnenolone sulfate + adenosine 3',5'-bisphosphate + H(+). It catalyses the reaction androsterone + 3'-phosphoadenylyl sulfate = androsterone 3alpha-sulfate + adenosine 3',5'-bisphosphate + H(+). Its function is as follows. Sulfotransferase that utilizes 3'-phospho-5'-adenylyl sulfate (PAPS) as sulfonate donor to catalyze the sulfonation of steroids and bile acids in the liver and adrenal glands. Mediates the sulfation of a wide range of steroids and sterols, including pregnenolone, androsterone, DHEA, bile acids, cholesterol and as well many xenobiotics that contain alcohol and phenol functional groups. Sulfonation increases the water solubility of most compounds, and therefore their renal excretion, but it can also result in bioactivation to form active metabolites. Plays an important role in maintening steroid and lipid homeostasis. Plays a key role in bile acid metabolism. In addition, catalyzes the metabolic activation of potent carcinogenic polycyclic arylmethanols. The sequence is that of Sulfotransferase 2A1 (Sult2a1) from Rattus norvegicus (Rat).